A 295-amino-acid chain; its full sequence is Diaminopimelate epimerase (295 aa).

Asparagine 13, glutamine 46, and asparagine 66 together coordinate substrate. Residue cysteine 75 is the Proton donor of the active site. Substrate is bound by residues 76–77 (GN), asparagine 162, asparagine 195, and 213–214 (ER). Cysteine 222 serves as the catalytic Proton acceptor. Position 223-224 (223-224 (GT)) interacts with substrate.

This sequence belongs to the diaminopimelate epimerase family. In terms of assembly, homodimer.

It is found in the cytoplasm. It catalyses the reaction (2S,6S)-2,6-diaminopimelate = meso-2,6-diaminopimelate. Its pathway is amino-acid biosynthesis; L-lysine biosynthesis via DAP pathway; DL-2,6-diaminopimelate from LL-2,6-diaminopimelate: step 1/1. In terms of biological role, catalyzes the stereoinversion of LL-2,6-diaminopimelate (L,L-DAP) to meso-diaminopimelate (meso-DAP), a precursor of L-lysine and an essential component of the bacterial peptidoglycan. This chain is Diaminopimelate epimerase, found in Psychrobacter arcticus (strain DSM 17307 / VKM B-2377 / 273-4).